The primary structure comprises 876 residues: Alanine--tRNA ligase (876 aa).

Lys-74 is subject to N6-acetyllysine. 4 residues coordinate Zn(2+): His-564, His-568, Cys-666, and His-670.

Belongs to the class-II aminoacyl-tRNA synthetase family. As to quaternary structure, homotetramer. Requires Zn(2+) as cofactor.

The protein localises to the cytoplasm. It catalyses the reaction tRNA(Ala) + L-alanine + ATP = L-alanyl-tRNA(Ala) + AMP + diphosphate. Functionally, catalyzes the attachment of alanine to tRNA(Ala) in a two-step reaction: alanine is first activated by ATP to form Ala-AMP and then transferred to the acceptor end of tRNA(Ala). Also edits incorrectly charged Ser-tRNA(Ala) and Gly-tRNA(Ala) via its editing domain. The sequence is that of Alanine--tRNA ligase from Escherichia coli O157:H7.